A 224-amino-acid polypeptide reads, in one-letter code: Transcription factor MYB1 (224 aa).

2 HTH myb-type domains span residues 10–66 (LGRV…KPSI) and 67–117 (KRGH…YKKH). 2 consecutive DNA-binding regions (H-T-H motif) follow at residues 38-62 (WKRV…LNYL) and 90-113 (WSLI…NTHL).

The protein localises to the nucleus. Activates DODA1 and CYP76AD1 in the betalain red pigment pathway. The chain is Transcription factor MYB1 from Beta vulgaris (Sugar beet).